The primary structure comprises 291 residues: 4-hydroxy-tetrahydrodipicolinate synthase (291 aa).

Thr45 serves as a coordination point for pyruvate. Tyr133 serves as the catalytic Proton donor/acceptor. The active-site Schiff-base intermediate with substrate is the Lys161. Residue Ile203 coordinates pyruvate.

This sequence belongs to the DapA family. Homotetramer; dimer of dimers.

The protein localises to the cytoplasm. The catalysed reaction is L-aspartate 4-semialdehyde + pyruvate = (2S,4S)-4-hydroxy-2,3,4,5-tetrahydrodipicolinate + H2O + H(+). It functions in the pathway amino-acid biosynthesis; L-lysine biosynthesis via DAP pathway; (S)-tetrahydrodipicolinate from L-aspartate: step 3/4. In terms of biological role, catalyzes the condensation of (S)-aspartate-beta-semialdehyde [(S)-ASA] and pyruvate to 4-hydroxy-tetrahydrodipicolinate (HTPA). This is 4-hydroxy-tetrahydrodipicolinate synthase from Neisseria gonorrhoeae (strain ATCC 700825 / FA 1090).